A 388-amino-acid chain; its full sequence is Mycinamicin VIII C21 methyl hydroxylase (388 aa).

H87, R91, R279, H335, and C337 together coordinate heme.

Belongs to the cytochrome P450 family. Requires heme as cofactor.

It participates in antibiotic biosynthesis; mycinamicin biosynthesis. Functionally, involved in the biosynthesis of mycinamicin, a 16-membered macrolide antibiotic. Catalyzes hydroxylation at the C21 methyl group of mycinamicin VIII, the earliest macrolide form in the postpolyketide synthase tailoring pathway, leading to mycinamicin VII. Uses ferredoxin MycCII in electron transfer for catalysis. The protein is Mycinamicin VIII C21 methyl hydroxylase of Micromonospora griseorubida.